The primary structure comprises 208 residues: Uracil phosphoribosyltransferase (208 aa).

Residues Arg-78, Arg-103, and Asp-130–Thr-138 contribute to the 5-phospho-alpha-D-ribose 1-diphosphate site. Residues Ile-193 and Gly-198–Ala-200 contribute to the uracil site. Asp-199 serves as a coordination point for 5-phospho-alpha-D-ribose 1-diphosphate.

The protein belongs to the UPRTase family. The cofactor is Mg(2+).

The enzyme catalyses UMP + diphosphate = 5-phospho-alpha-D-ribose 1-diphosphate + uracil. Its pathway is pyrimidine metabolism; UMP biosynthesis via salvage pathway; UMP from uracil: step 1/1. Its activity is regulated as follows. Allosterically activated by GTP. In terms of biological role, catalyzes the conversion of uracil and 5-phospho-alpha-D-ribose 1-diphosphate (PRPP) to UMP and diphosphate. In Campylobacter jejuni subsp. jejuni serotype O:6 (strain 81116 / NCTC 11828), this protein is Uracil phosphoribosyltransferase.